We begin with the raw amino-acid sequence, 101 residues long: Small integral membrane protein 14 (101 aa).

Basic and acidic residues predominate over residues 71 to 81; it reads SDRRTADDAAI. Residues 71–101 form a disordered region; the sequence is SDRRTADDAAIEKPTGSSDDNTPPPPPPSAM. Pro residues predominate over residues 92 to 101; that stretch reads TPPPPPPSAM.

This Caenorhabditis elegans protein is Small integral membrane protein 14.